We begin with the raw amino-acid sequence, 34 residues long: Egg-releasing peptide (34 aa).

In Aplysia californica (California sea hare), this protein is Egg-releasing peptide.